The chain runs to 431 residues: Histidinol dehydrogenase (431 aa).

NAD(+) is bound by residues Y129, Q191, and N214. Residues S237, Q259, and H262 each coordinate substrate. Zn(2+) contacts are provided by Q259 and H262. Active-site proton acceptor residues include E327 and H328. Substrate is bound by residues H328, D361, E415, and H420. Residue D361 participates in Zn(2+) binding. H420 provides a ligand contact to Zn(2+).

It belongs to the histidinol dehydrogenase family. It depends on Zn(2+) as a cofactor.

The enzyme catalyses L-histidinol + 2 NAD(+) + H2O = L-histidine + 2 NADH + 3 H(+). It functions in the pathway amino-acid biosynthesis; L-histidine biosynthesis; L-histidine from 5-phospho-alpha-D-ribose 1-diphosphate: step 9/9. In terms of biological role, catalyzes the sequential NAD-dependent oxidations of L-histidinol to L-histidinaldehyde and then to L-histidine. This chain is Histidinol dehydrogenase (hisD), found in Lactococcus lactis subsp. lactis (strain IL1403) (Streptococcus lactis).